The following is a 355-amino-acid chain: 5-formaminoimidazole-4-carboxamide-1-(beta)-D-ribofuranosyl 5'-monophosphate synthetase (355 aa).

The 5-amino-1-(5-phospho-beta-D-ribosyl)imidazole-4-carboxamide site is built by H27 and S94. Positions 101-332 (TESFAELAVP…YSDMIEENLS (232 aa)) constitute an ATP-grasp domain. Residues 144–195 (PEKI…TRYY) and E225 each bind ATP. Position 254 (N254) interacts with 5-amino-1-(5-phospho-beta-D-ribosyl)imidazole-4-carboxamide. E292 and E305 together coordinate Mg(2+).

It belongs to the phosphohexose mutase family. Requires Mg(2+) as cofactor. It depends on Mn(2+) as a cofactor.

The enzyme catalyses 5-amino-1-(5-phospho-beta-D-ribosyl)imidazole-4-carboxamide + formate + ATP = 5-formamido-1-(5-phospho-D-ribosyl)imidazole-4-carboxamide + ADP + phosphate. It functions in the pathway purine metabolism; IMP biosynthesis via de novo pathway; 5-formamido-1-(5-phospho-D-ribosyl)imidazole-4-carboxamide from 5-amino-1-(5-phospho-D-ribosyl)imidazole-4-carboxamide (formate route): step 1/1. Functionally, catalyzes the ATP- and formate-dependent formylation of 5-aminoimidazole-4-carboxamide-1-beta-d-ribofuranosyl 5'-monophosphate (AICAR) to 5-formaminoimidazole-4-carboxamide-1-beta-d-ribofuranosyl 5'-monophosphate (FAICAR) in the absence of folates. This Methanococcoides burtonii (strain DSM 6242 / NBRC 107633 / OCM 468 / ACE-M) protein is 5-formaminoimidazole-4-carboxamide-1-(beta)-D-ribofuranosyl 5'-monophosphate synthetase.